The chain runs to 306 residues: Acetaldehyde dehydrogenase 3 (306 aa).

The active-site Acyl-thioester intermediate is the cysteine 131. NAD(+)-binding positions include 162–170 (SVGPGTRKN) and asparagine 273.

The protein belongs to the acetaldehyde dehydrogenase family.

It carries out the reaction acetaldehyde + NAD(+) + CoA = acetyl-CoA + NADH + H(+). The protein is Acetaldehyde dehydrogenase 3 of Burkholderia lata (strain ATCC 17760 / DSM 23089 / LMG 22485 / NCIMB 9086 / R18194 / 383).